The chain runs to 380 residues: ATPase ASNA1 homolog (380 aa).

K48–T55 lines the ATP pocket. Residue D77 is part of the active site. Residues E248 and N275 each contribute to the ATP site.

This sequence belongs to the arsA ATPase family. As to quaternary structure, homodimer.

The protein resides in the cytoplasm. The protein localises to the endoplasmic reticulum. In terms of biological role, ATPase required for the post-translational delivery of tail-anchored (TA) proteins to the endoplasmic reticulum. Recognizes and selectively binds the transmembrane domain of TA proteins in the cytosol. This complex then targets to the endoplasmic reticulum by membrane-bound receptors, where the tail-anchored protein is released for insertion. This process is regulated by ATP binding and hydrolysis. ATP binding drives the homodimer towards the closed dimer state, facilitating recognition of newly synthesized TA membrane proteins. ATP hydrolysis is required for insertion. Subsequently, the homodimer reverts towards the open dimer state, lowering its affinity for the membrane-bound receptor, and returning it to the cytosol to initiate a new round of targeting. The polypeptide is ATPase ASNA1 homolog (Plasmodium chabaudi chabaudi).